Reading from the N-terminus, the 157-residue chain is MAEEEHVDFEGGEAGASLTFPMQCSALRKNGHVVIKGRPCKIVDMSTSKTGKHGHAKVHIVALDIFNGRKYEDMSPSTHNMDVPVVKRDEYQLVNIDDGYLNLMTTDGTTKDDVRLPEGELGNEIEEGFDEGRDLIITVVSAMGEETALACRDAPSS.

Position 52 is a hypusine (Lys52). Ser75 and Ser77 each carry phosphoserine. Thr78 bears the Phosphothreonine mark.

Belongs to the eIF-5A family. Lys-52 undergoes hypusination, a unique post-translational modification that consists in the addition of a butylamino group from spermidine to lysine side chain, leading to the formation of the unusual amino acid hypusine. eIF-5As are the only known proteins to undergo this modification, which is essential for their function.

Its subcellular location is the cytoplasm. Translation factor that promotes translation elongation and termination, particularly upon ribosome stalling at specific amino acid sequence contexts. Binds between the exit (E) and peptidyl (P) site of the ribosome and promotes rescue of stalled ribosome: specifically required for efficient translation of polyproline-containing peptides as well as other motifs that stall the ribosome. Acts as a ribosome quality control (RQC) cofactor by joining the RQC complex to facilitate peptidyl transfer during CAT tailing step. The sequence is that of Eukaryotic translation initiation factor 5A-1 (tif51a) from Schizosaccharomyces pombe (strain 972 / ATCC 24843) (Fission yeast).